We begin with the raw amino-acid sequence, 149 residues long: Ribosomal RNA large subunit methyltransferase H (149 aa).

Residues Leu-71, Gly-98, and 117 to 122 (LSKMTL) each bind S-adenosyl-L-methionine.

Belongs to the RNA methyltransferase RlmH family. As to quaternary structure, homodimer.

It is found in the cytoplasm. The catalysed reaction is pseudouridine(1915) in 23S rRNA + S-adenosyl-L-methionine = N(3)-methylpseudouridine(1915) in 23S rRNA + S-adenosyl-L-homocysteine + H(+). Its function is as follows. Specifically methylates the pseudouridine at position 1915 (m3Psi1915) in 23S rRNA. This Campylobacter fetus subsp. fetus (strain 82-40) protein is Ribosomal RNA large subunit methyltransferase H.